A 126-amino-acid chain; its full sequence is Profilin (126 aa).

Belongs to the profilin family. As to quaternary structure, occurs in many kinds of cells as a complex with monomeric actin in a 1:1 ratio.

The protein resides in the cytoplasm. Its subcellular location is the cytoskeleton. In terms of biological role, binds to actin and affects the structure of the cytoskeleton. At high concentrations, profilin prevents the polymerization of actin, whereas it enhances it at low concentrations. By binding to PIP2, it inhibits the formation of IP3 and DG. This Saccharomyces cerevisiae (strain ATCC 204508 / S288c) (Baker's yeast) protein is Profilin (PFY1).